The chain runs to 1025 residues: Leucyl-cystinyl aminopeptidase (1025 aa).

N-acetylmethionine is present on methionine 1. Topologically, residues 1–109 (MESFTNDRLQ…DGTCSLPSAR (109 aa)) are cytoplasmic. Residues 53–54 (LL) carry the Dileucine internalization motif motif. Tyrosine 70 carries the post-translational modification Phosphotyrosine. The short motif at 76–77 (LL) is the Dileucine internalization motif element. A phosphoserine mark is found at serine 80 and serine 91. The interval 96–101 (RQSPDG) is tankyrase binding. Residues 110–131 (TLVICVFVIVVAVSVIMVIYLL) form a helical; Signal-anchor for type II membrane protein membrane-spanning segment. The Extracellular segment spans residues 132–1025 (PRCTFTKEGC…RNLKTLSQWL (894 aa)). Asparagine 145, asparagine 184, asparagine 215, asparagine 256, and asparagine 266 each carry an N-linked (GlcNAc...) asparagine glycan. Position 295 (glutamate 295) interacts with substrate. N-linked (GlcNAc...) asparagine glycosylation is found at asparagine 368 and asparagine 374. Residue 428–432 (GAMEN) participates in substrate binding. Asparagine 447 is a glycosylation site (N-linked (GlcNAc...) asparagine). Histidine 464 is a binding site for Zn(2+). Catalysis depends on glutamate 465, which acts as the Proton acceptor. Histidine 468 and glutamate 487 together coordinate Zn(2+). Residues asparagine 525, asparagine 578, asparagine 664, asparagine 682, asparagine 695, asparagine 758, asparagine 834, asparagine 850, and asparagine 989 are each glycosylated (N-linked (GlcNAc...) asparagine).

The protein belongs to the peptidase M1 family. In terms of assembly, homodimer. Binds tankyrases 1 and 2. Zn(2+) is required as a cofactor.

The protein localises to the cell membrane. It is found in the endomembrane system. The enzyme catalyses Release of an N-terminal amino acid, Cys-|-Xaa-, in which the half-cystine residue is involved in a disulfide loop, notably in oxytocin or vasopressin. Hydrolysis rates on a range of aminoacyl arylamides exceed that for the cystinyl derivative, however.. Its function is as follows. Release of an N-terminal amino acid, cleave before cysteine, leucine as well as other amino acids. Degrades peptide hormones such as oxytocin, vasopressin and angiotensin III, and plays a role in maintaining homeostasis during pregnancy. May be involved in the inactivation of neuronal peptides in the brain. Cleaves Met-enkephalin and dynorphin. Binds angiotensin IV and may be the angiotensin IV receptor in the brain. The sequence is that of Leucyl-cystinyl aminopeptidase (Lnpep) from Mus musculus (Mouse).